Reading from the N-terminus, the 448-residue chain is MTEISSMVISHKKAKVEEMESAWHGDLDGLLRNLYKHEYVYECVVLKTCNRVEIYVVSPKSSSVLFSFAKEMGASTHIIDFYGHDESLEHLLRLAGGLESMIVGEDQILGQIKDLYAYSKKAGTTGKILETAFEKAIQVGKRIRNETRINKGSVSIGSAAVDLAEDIFGGLTGKNVLVIGAGEIGVLVAKALAEKDIEAIYIANRTYKKAEEIAYELGGHAVRLDDIRDYLPGADVVISGTGAPHYILTREIVEEAIKCRERKLLLIDIANPRDIEESVVELENVELCNIDNLRVISERTLRMRKEEAKKAEAIIQEEIRLLNLQYKRQKADRLISELYKQVYDVRLRERQKAVNRLSSYHTIGDIETEVLDDLTRSIVNKILGEPTKVLRQAAELGNEEFLDVVSRVFCLDKEKVRFEKIKQAKFDQIKPGCTKEQAEVKEEYAVKD.

Substrate is bound by residues 48-51 (TCNR), Ser100, 105-107 (EDQ), and Gln111. Catalysis depends on Cys49, which acts as the Nucleophile. NADP(+) is bound at residue 180–185 (GAGEIG).

The protein belongs to the glutamyl-tRNA reductase family. In terms of assembly, homodimer.

The catalysed reaction is (S)-4-amino-5-oxopentanoate + tRNA(Glu) + NADP(+) = L-glutamyl-tRNA(Glu) + NADPH + H(+). It participates in porphyrin-containing compound metabolism; protoporphyrin-IX biosynthesis; 5-aminolevulinate from L-glutamyl-tRNA(Glu): step 1/2. Functionally, catalyzes the NADPH-dependent reduction of glutamyl-tRNA(Glu) to glutamate 1-semialdehyde (GSA). The chain is Glutamyl-tRNA reductase from Methanosarcina mazei (strain ATCC BAA-159 / DSM 3647 / Goe1 / Go1 / JCM 11833 / OCM 88) (Methanosarcina frisia).